The primary structure comprises 355 residues: Probable butyrate kinase (355 aa).

This sequence belongs to the acetokinase family.

Its subcellular location is the cytoplasm. The enzyme catalyses butanoate + ATP = butanoyl phosphate + ADP. The chain is Probable butyrate kinase from Listeria monocytogenes serotype 4a (strain HCC23).